The following is a 498-amino-acid chain: Histidine--tRNA ligase (498 aa).

Belongs to the class-II aminoacyl-tRNA synthetase family. As to quaternary structure, homodimer.

Its subcellular location is the cytoplasm. The enzyme catalyses tRNA(His) + L-histidine + ATP = L-histidyl-tRNA(His) + AMP + diphosphate + H(+). This chain is Histidine--tRNA ligase, found in Bartonella quintana (strain Toulouse) (Rochalimaea quintana).